Reading from the N-terminus, the 210-residue chain is 7-cyano-7-deazaguanine synthase 2 (210 aa).

Position 10 to 20 (10 to 20) interacts with ATP; that stretch reads HSGGMDSTTCL. Residues cysteine 180, cysteine 193, cysteine 196, and cysteine 199 each coordinate Zn(2+).

This sequence belongs to the QueC family. It depends on Zn(2+) as a cofactor.

The catalysed reaction is 7-carboxy-7-deazaguanine + NH4(+) + ATP = 7-cyano-7-deazaguanine + ADP + phosphate + H2O + H(+). Its pathway is purine metabolism; 7-cyano-7-deazaguanine biosynthesis. Functionally, catalyzes the ATP-dependent conversion of 7-carboxy-7-deazaguanine (CDG) to 7-cyano-7-deazaguanine (preQ(0)). This chain is 7-cyano-7-deazaguanine synthase 2, found in Rhodopseudomonas palustris (strain HaA2).